We begin with the raw amino-acid sequence, 149 residues long: Large ribosomal subunit protein bL20m (149 aa).

The N-terminal 9 residues, 1–9 (MVFLSLSRW), are a transit peptide targeting the mitochondrion.

It belongs to the bacterial ribosomal protein bL20 family. In terms of assembly, component of the mitochondrial ribosome large subunit (39S) which comprises a 16S rRNA and about 50 distinct proteins.

It localises to the mitochondrion. The polypeptide is Large ribosomal subunit protein bL20m (mrpl20) (Xenopus laevis (African clawed frog)).